The sequence spans 440 residues: Light-independent protochlorophyllide reductase subunit N (440 aa).

The interval 1-24 is disordered; that stretch reads MTCRPALSDSHPPEPGTPSSPSFG. Cys-42, Cys-67, and Cys-128 together coordinate [4Fe-4S] cluster.

It belongs to the BchN/ChlN family. As to quaternary structure, protochlorophyllide reductase is composed of three subunits; BchL, BchN and BchB. Forms a heterotetramer of two BchB and two BchN subunits. The cofactor is [4Fe-4S] cluster.

It catalyses the reaction chlorophyllide a + oxidized 2[4Fe-4S]-[ferredoxin] + 2 ADP + 2 phosphate = protochlorophyllide a + reduced 2[4Fe-4S]-[ferredoxin] + 2 ATP + 2 H2O. It functions in the pathway porphyrin-containing compound metabolism; bacteriochlorophyll biosynthesis (light-independent). Functionally, component of the dark-operative protochlorophyllide reductase (DPOR) that uses Mg-ATP and reduced ferredoxin to reduce ring D of protochlorophyllide (Pchlide) to form chlorophyllide a (Chlide). This reaction is light-independent. The NB-protein (BchN-BchB) is the catalytic component of the complex. The polypeptide is Light-independent protochlorophyllide reductase subunit N (Rhodospirillum rubrum (strain ATCC 11170 / ATH 1.1.1 / DSM 467 / LMG 4362 / NCIMB 8255 / S1)).